Consider the following 156-residue polypeptide: ATP synthase subunit b (156 aa).

Residues 1–21 (MSINATLLIQIIAFVLLIWFV) traverse the membrane as a helical segment.

This sequence belongs to the ATPase B chain family. F-type ATPases have 2 components, F(1) - the catalytic core - and F(0) - the membrane proton channel. F(1) has five subunits: alpha(3), beta(3), gamma(1), delta(1), epsilon(1). F(0) has three main subunits: a(1), b(2) and c(10-14). The alpha and beta chains form an alternating ring which encloses part of the gamma chain. F(1) is attached to F(0) by a central stalk formed by the gamma and epsilon chains, while a peripheral stalk is formed by the delta and b chains.

It is found in the cell inner membrane. F(1)F(0) ATP synthase produces ATP from ADP in the presence of a proton or sodium gradient. F-type ATPases consist of two structural domains, F(1) containing the extramembraneous catalytic core and F(0) containing the membrane proton channel, linked together by a central stalk and a peripheral stalk. During catalysis, ATP synthesis in the catalytic domain of F(1) is coupled via a rotary mechanism of the central stalk subunits to proton translocation. Functionally, component of the F(0) channel, it forms part of the peripheral stalk, linking F(1) to F(0). The polypeptide is ATP synthase subunit b (Hydrogenovibrio crunogenus (strain DSM 25203 / XCL-2) (Thiomicrospira crunogena)).